Consider the following 420-residue polypeptide: Gamma-glutamyl phosphate reductase (420 aa).

It belongs to the gamma-glutamyl phosphate reductase family.

It localises to the cytoplasm. The enzyme catalyses L-glutamate 5-semialdehyde + phosphate + NADP(+) = L-glutamyl 5-phosphate + NADPH + H(+). The protein operates within amino-acid biosynthesis; L-proline biosynthesis; L-glutamate 5-semialdehyde from L-glutamate: step 2/2. Functionally, catalyzes the NADPH-dependent reduction of L-glutamate 5-phosphate into L-glutamate 5-semialdehyde and phosphate. The product spontaneously undergoes cyclization to form 1-pyrroline-5-carboxylate. In Acidiphilium cryptum (strain JF-5), this protein is Gamma-glutamyl phosphate reductase.